The primary structure comprises 270 residues: Putative carboxymethylenebutenolidase (270 aa).

Residues C147, D204, and H236 contribute to the active site.

This sequence belongs to the dienelactone hydrolase family.

It catalyses the reaction 2-(5-oxo-2,5-dihydrofuran-2-ylidene)acetate + H2O = 4-oxohex-2-enedioate + H(+). The protein is Putative carboxymethylenebutenolidase (ysgA) of Salmonella typhimurium (strain LT2 / SGSC1412 / ATCC 700720).